The sequence spans 422 residues: UDP-N-acetylglucosamine 1-carboxyvinyltransferase (422 aa).

23 to 24 (KN) contacts phosphoenolpyruvate. R92 provides a ligand contact to UDP-N-acetyl-alpha-D-glucosamine. C116 serves as the catalytic Proton donor. C116 is modified (2-(S-cysteinyl)pyruvic acid O-phosphothioketal). UDP-N-acetyl-alpha-D-glucosamine is bound by residues 121 to 125 (RPVDL), 161 to 164 (KVSV), D306, and I328.

Belongs to the EPSP synthase family. MurA subfamily.

The protein resides in the cytoplasm. The enzyme catalyses phosphoenolpyruvate + UDP-N-acetyl-alpha-D-glucosamine = UDP-N-acetyl-3-O-(1-carboxyvinyl)-alpha-D-glucosamine + phosphate. It participates in cell wall biogenesis; peptidoglycan biosynthesis. Cell wall formation. Adds enolpyruvyl to UDP-N-acetylglucosamine. This is UDP-N-acetylglucosamine 1-carboxyvinyltransferase from Aliivibrio salmonicida (strain LFI1238) (Vibrio salmonicida (strain LFI1238)).